The sequence spans 469 residues: UDP-N-acetylmuramate--L-alanine ligase (469 aa).

118 to 124 lines the ATP pocket; sequence GTHGKTT.

This sequence belongs to the MurCDEF family.

The protein resides in the cytoplasm. It catalyses the reaction UDP-N-acetyl-alpha-D-muramate + L-alanine + ATP = UDP-N-acetyl-alpha-D-muramoyl-L-alanine + ADP + phosphate + H(+). It participates in cell wall biogenesis; peptidoglycan biosynthesis. In terms of biological role, cell wall formation. In Lachnoclostridium phytofermentans (strain ATCC 700394 / DSM 18823 / ISDg) (Clostridium phytofermentans), this protein is UDP-N-acetylmuramate--L-alanine ligase.